The primary structure comprises 60 residues: Large ribosomal subunit protein bL32 (60 aa).

Residues 1–60 (MAVQQNKKSPSKRGMHRSHDFLVNPATAIEPNTGETHLRHHISPNGFYRGRKVLKTKADE) are disordered. Residues 49–60 (RGRKVLKTKADE) show a composition bias toward basic residues.

Belongs to the bacterial ribosomal protein bL32 family.

This Bordetella bronchiseptica (strain ATCC BAA-588 / NCTC 13252 / RB50) (Alcaligenes bronchisepticus) protein is Large ribosomal subunit protein bL32.